Reading from the N-terminus, the 134-residue chain is ATP synthase epsilon chain (134 aa).

The protein belongs to the ATPase epsilon chain family. As to quaternary structure, F-type ATPases have 2 components, CF(1) - the catalytic core - and CF(0) - the membrane proton channel. CF(1) has five subunits: alpha(3), beta(3), gamma(1), delta(1), epsilon(1). CF(0) has three main subunits: a, b and c.

The protein resides in the cell membrane. Functionally, produces ATP from ADP in the presence of a proton gradient across the membrane. This Staphylococcus aureus (strain USA300) protein is ATP synthase epsilon chain.